The following is a 62-amino-acid chain: Large ribosomal subunit protein eL19 (62 aa).

The protein belongs to the eukaryotic ribosomal protein eL19 family.

This is Large ribosomal subunit protein eL19 (RPL19) from Zea mays (Maize).